The following is a 65-amino-acid chain: MKILYLLFAFLFLAFLSEPGNAYKQCHKKGGHCFPKEKICLPPSSDFGKMDCRWRWKCCKKGSGK.

The signal sequence occupies residues 1 to 22; that stretch reads MKILYLLFAFLFLAFLSEPGNA. 2 consecutive short sequence motifs (nuclear localization signal) follow at residues 24-40 and 49-61; these read KQCHKKGGHCFPKEKIC and KMDCRWRWKCCKK. 3 cysteine pairs are disulfide-bonded: Cys-26–Cys-58, Cys-33–Cys-52, and Cys-40–Cys-59.

Belongs to the crotamine-myotoxin family. As to quaternary structure, monomer. Expressed by the venom gland.

It is found in the secreted. Its function is as follows. Cationic peptide that possesses multiple functions. It acts as a cell-penetrating peptide (CPP), and as a potent voltage-gated potassium channel inhibitor. It exhibits antimicrobial activities, hind limb paralysis, and severe muscle necrosis by a non-enzymatic mechanism. As a cell-penetrating peptide, crotamine has high specificity for actively proliferating cells, and interacts inside the cell with subcellular and subnuclear structures, like vesicular compartments, chromosomes and centrioles. It penetrates into the cells as fast as five minutes after its addition to cell culture medium. In vivo, after intraperitoneal administration, it is found in cells of peritoneal fluid and bone marrow, demonstrating preferential nuclear and perinuclear localization. To enter the cell, it interacts with the chains of heparan sulfate membrane proteoglycan (HSPG), and is endocytosed (in complex with HSPG) in vesicles which are transported into the cell with the help of clathrin. Inside the cell, crotamine accumulates in lysosomal vesicles. As soon as the peptide accumulates in endosomes/lysosomes vesicles, these compartments are disrupted and their contents released into the cytosol. This loss of lysosomal content induces cell death at high concentrations, or promotes the distribution of crotamine in cytoplasmic compartments, which is a step before crotamine nuclear uptake. As a potassium channel inhibitor, this toxin selectively inhibits Kv1.1/KCNA1, Kv1.2/KCNA2 and Kv1.3/KCNA3 channels with an IC(50) of 369, 386 and 287 nM, respectively. The inhibition of Kv1.3/KCNA channels induced by this toxin occurs rapidly and is voltage-independent. The channel inhibition is reversible after washing, suggesting a pure and classical channel blockage effect, without effects in potassium channel kinetics. As an antimicrobial peptide, crotamine shows antibacterial activity against E.coli and B.subtilis, and antifungal activity against Candida spp., Trichosporon spp. and C.neoformans. It kills bacteria through membrane permeabilization. The protein is Crotamine (CRO2) of Crotalus durissus terrificus (South American rattlesnake).